The following is a 415-amino-acid chain: Phosphoribosylamine--glycine ligase (415 aa).

The ATP-grasp domain occupies 108–311 (KKIMEKYNIP…LMQHIIDLDE (204 aa)). 134 to 191 (IENCEFPVVVKKDGLAAGKGVIIADTIEAARSAIEIMYGDEEEGTVVFETFLEGEEFS) provides a ligand contact to ATP. Mg(2+) contacts are provided by E281 and N283.

It belongs to the GARS family. The cofactor is Mg(2+). It depends on Mn(2+) as a cofactor.

The catalysed reaction is 5-phospho-beta-D-ribosylamine + glycine + ATP = N(1)-(5-phospho-beta-D-ribosyl)glycinamide + ADP + phosphate + H(+). Its pathway is purine metabolism; IMP biosynthesis via de novo pathway; N(1)-(5-phospho-D-ribosyl)glycinamide from 5-phospho-alpha-D-ribose 1-diphosphate: step 2/2. The protein is Phosphoribosylamine--glycine ligase of Staphylococcus aureus (strain MRSA252).